Reading from the N-terminus, the 102-residue chain is P antigen family member 4 (102 aa).

A compositionally biased stretch (basic residues) spans 1–10; the sequence is MSARVRSRSR. The segment at 1 to 102 is disordered; it reads MSARVRSRSR…KTKEAGDGQP (102 aa). Phosphoserine; by CLK2 is present on Ser-7. Residue Ser-9 is modified to Phosphoserine; by HIPK1 and CLK2. Over residues 45–85 the composition is skewed to basic and acidic residues; it reads GQEREGTPPIEERKVEGDCQEMDLEKTRSERGDGSDVKEKT. Thr-51 carries the phosphothreonine; by HIPK1 and CLK2 modification. A Phosphothreonine; by CLK2 modification is found at Thr-71. Residues Ser-73 and Ser-79 each carry the phosphoserine; by CLK2 modification. Phosphothreonine; by CLK2 occurs at positions 85 and 94.

Belongs to the GAGE family. As to quaternary structure, interacts with JUN. HIPK1-mediated phosphorylation at Thr-51 leads to the compaction of its intrinsically disordered conformation and is critical for its ability to potentiate the transcriptional activator activity of JUN inspite of a reduced interaction with JUN. CLK2-mediated phosphorylation at multiple Ser and Thr residues attenuates its ability to potentiate JUN transcriptional activator activity. As to expression, expressed at basal lvels in the adult normal prostate gland but is highly up-regulated in the fetal prostate and prostate cancer cells. Preferentially expressed in normal male and female reproductive tissues, testis, fallopian tube, uterus, and placenta, as well as in testicular cancer, uterine cancer, cervical cancer and kidney cancer.

It localises to the cytoplasm. It is found in the nucleus. Its subcellular location is the mitochondrion. Intrinsically disordered protein that potentiates the transcriptional activator activity of JUN. Protects cells from stress-induced apoptosis by inhibiting reactive oxygen species (ROS) production and via regulation of the MAPK signaling pathway. This chain is P antigen family member 4 (PAGE4), found in Homo sapiens (Human).